We begin with the raw amino-acid sequence, 193 residues long: Capsid protein (193 aa).

Post-translationally, the N-terminus is blocked.

Its subcellular location is the virion. The sequence is that of Capsid protein from Crataegus (hawthorn).